A 316-amino-acid polypeptide reads, in one-letter code: 4-hydroxy-3-methylbut-2-enyl diphosphate reductase (316 aa).

Cys-12 contributes to the [4Fe-4S] cluster binding site. (2E)-4-hydroxy-3-methylbut-2-enyl diphosphate-binding residues include His-41 and His-74. Dimethylallyl diphosphate contacts are provided by His-41 and His-74. The isopentenyl diphosphate site is built by His-41 and His-74. Residue Cys-96 participates in [4Fe-4S] cluster binding. His-124 contributes to the (2E)-4-hydroxy-3-methylbut-2-enyl diphosphate binding site. Position 124 (His-124) interacts with dimethylallyl diphosphate. His-124 contributes to the isopentenyl diphosphate binding site. Residue Glu-126 is the Proton donor of the active site. A (2E)-4-hydroxy-3-methylbut-2-enyl diphosphate-binding site is contributed by Thr-168. [4Fe-4S] cluster is bound at residue Cys-198. 4 residues coordinate (2E)-4-hydroxy-3-methylbut-2-enyl diphosphate: Ser-226, Ser-227, Asn-228, and Ser-270. Residues Ser-226, Ser-227, Asn-228, and Ser-270 each contribute to the dimethylallyl diphosphate site. Residues Ser-226, Ser-227, Asn-228, and Ser-270 each coordinate isopentenyl diphosphate.

It belongs to the IspH family. It depends on [4Fe-4S] cluster as a cofactor.

The enzyme catalyses isopentenyl diphosphate + 2 oxidized [2Fe-2S]-[ferredoxin] + H2O = (2E)-4-hydroxy-3-methylbut-2-enyl diphosphate + 2 reduced [2Fe-2S]-[ferredoxin] + 2 H(+). It catalyses the reaction dimethylallyl diphosphate + 2 oxidized [2Fe-2S]-[ferredoxin] + H2O = (2E)-4-hydroxy-3-methylbut-2-enyl diphosphate + 2 reduced [2Fe-2S]-[ferredoxin] + 2 H(+). It participates in isoprenoid biosynthesis; dimethylallyl diphosphate biosynthesis; dimethylallyl diphosphate from (2E)-4-hydroxy-3-methylbutenyl diphosphate: step 1/1. Its pathway is isoprenoid biosynthesis; isopentenyl diphosphate biosynthesis via DXP pathway; isopentenyl diphosphate from 1-deoxy-D-xylulose 5-phosphate: step 6/6. Functionally, catalyzes the conversion of 1-hydroxy-2-methyl-2-(E)-butenyl 4-diphosphate (HMBPP) into a mixture of isopentenyl diphosphate (IPP) and dimethylallyl diphosphate (DMAPP). Acts in the terminal step of the DOXP/MEP pathway for isoprenoid precursor biosynthesis. In Marinobacter nauticus (strain ATCC 700491 / DSM 11845 / VT8) (Marinobacter aquaeolei), this protein is 4-hydroxy-3-methylbut-2-enyl diphosphate reductase.